Consider the following 701-residue polypeptide: Polyribonucleotide nucleotidyltransferase (701 aa).

Mg(2+)-binding residues include D487 and D493. The 60-residue stretch at 554-613 (PTMIAMKIDTDKIRDVIGKGGATIRAICEETKASIDIEDDGSIKIFGETKEAAEAARQRV) folds into the KH domain. The S1 motif domain occupies 623–691 (GKIYVGKVER…NRGRIKLSIK (69 aa)).

It belongs to the polyribonucleotide nucleotidyltransferase family. As to quaternary structure, component of the RNA degradosome, which is a multiprotein complex involved in RNA processing and mRNA degradation. It depends on Mg(2+) as a cofactor.

It localises to the cytoplasm. The catalysed reaction is RNA(n+1) + phosphate = RNA(n) + a ribonucleoside 5'-diphosphate. Involved in mRNA degradation. Catalyzes the phosphorolysis of single-stranded polyribonucleotides processively in the 3'- to 5'-direction. The sequence is that of Polyribonucleotide nucleotidyltransferase from Pseudomonas fluorescens (strain SBW25).